Here is a 426-residue protein sequence, read N- to C-terminus: mRNA cap guanine-N(7) methyltransferase (426 aa).

One can recognise an mRNA cap 0 methyltransferase domain in the interval Ser-138 to Val-421. Asn-147–Asn-148 is an mRNA binding site. The S-adenosyl-L-methionine site is built by Lys-151, Ala-169, Asp-191, Asp-220, Gln-246, and Tyr-251.

The protein belongs to the class I-like SAM-binding methyltransferase superfamily. mRNA cap 0 methyltransferase family.

Its subcellular location is the nucleus. The enzyme catalyses a 5'-end (5'-triphosphoguanosine)-ribonucleoside in mRNA + S-adenosyl-L-methionine = a 5'-end (N(7)-methyl 5'-triphosphoguanosine)-ribonucleoside in mRNA + S-adenosyl-L-homocysteine. Its function is as follows. Responsible for methylating the 5'-cap structure of mRNAs. This is mRNA cap guanine-N(7) methyltransferase (ABD1) from Kluyveromyces lactis (strain ATCC 8585 / CBS 2359 / DSM 70799 / NBRC 1267 / NRRL Y-1140 / WM37) (Yeast).